Reading from the N-terminus, the 987-residue chain is KAT8 regulatory NSL complex subunit 1-like protein (987 aa).

Lys134 is covalently cross-linked (Glycyl lysine isopeptide (Lys-Gly) (interchain with G-Cter in SUMO2)). Residue Ser462 is modified to Phosphoserine. The tract at residues 708–738 (RKKRHLSETALGERTKLEESDFQHTESGSHS) is disordered. Positions 718-731 (LGERTKLEESDFQH) are enriched in basic and acidic residues. Residues 794 to 915 (EILTPSWRMV…QSQETKSLWW (122 aa)) form the PEHE domain. At Lys859 the chain carries N6-acetyllysine. Residues 949–972 (GEIFGTSVPENGHHPKKQSDGMEE) form a disordered region. A compositionally biased stretch (basic and acidic residues) spans 959 to 972 (NGHHPKKQSDGMEE).

Post-translationally, acetylated on lysine residues by KAT8 upon ionizing radiation-induced DNA damage; deacetylated by HDAC3.

This is KAT8 regulatory NSL complex subunit 1-like protein (KANSL1L) from Homo sapiens (Human).